Here is a 126-residue protein sequence, read N- to C-terminus: C-type natriuretic peptide (126 aa).

A signal peptide spans 1–23; it reads MHLSQLLACALLLTLLSLRPSEA. Residues 19-72 form a disordered region; it reads RPSEAKPGAPPKVPRTPPGEEVAEPQAAGGGQKKGDKTPGGGGANLKGDRSRLL. Positions 24–73 are excised as a propeptide; it reads KPGAPPKVPRTPPGEEVAEPQAAGGGQKKGDKTPGGGGANLKGDRSRLLR. A compositionally biased stretch (pro residues) spans 26–35; sequence GAPPKVPRTP. Over residues 46-63 the composition is skewed to gly residues; sequence AGGGQKKGDKTPGGGGAN. Cysteine 110 and cysteine 126 are joined by a disulfide.

The protein belongs to the natriuretic peptide family. Post-translationally, degraded by IDE (in vitro).

The protein localises to the secreted. Its function is as follows. Hormone which plays a role in endochondral ossification through regulation of cartilaginous growth plate chondrocytes proliferation and differentiation. May also be vasoactive and natriuretic. Acts by specifically binding and stimulating NPR2 to produce cGMP. Binds the clearance receptor NPR3. This is C-type natriuretic peptide (NPPC) from Sus scrofa (Pig).